Here is a 435-residue protein sequence, read N- to C-terminus: Hydrogenobyrinate a,c-diamide synthase (435 aa).

One can recognise a GATase cobBQ-type domain in the interval arginine 239–glutamine 422. Cysteine 321 serves as the catalytic Nucleophile.

Belongs to the CobB/CbiA family. It depends on Mg(2+) as a cofactor.

The enzyme catalyses hydrogenobyrinate + 2 L-glutamine + 2 ATP + 2 H2O = hydrogenobyrinate a,c-diamide + 2 L-glutamate + 2 ADP + 2 phosphate + 2 H(+). It participates in cofactor biosynthesis; adenosylcobalamin biosynthesis; cob(II)yrinate a,c-diamide from precorrin-2 (aerobic route): step 9/10. Its function is as follows. Catalyzes the ATP-dependent amidation of the two carboxylate groups at positions a and c of hydrogenobyrinate, using either L-glutamine or ammonia as the nitrogen source. The chain is Hydrogenobyrinate a,c-diamide synthase from Pseudomonas aeruginosa (strain ATCC 15692 / DSM 22644 / CIP 104116 / JCM 14847 / LMG 12228 / 1C / PRS 101 / PAO1).